Here is a 322-residue protein sequence, read N- to C-terminus: Phospho-N-acetylmuramoyl-pentapeptide-transferase (322 aa).

10 consecutive transmembrane segments (helical) span residues 9-29 (IALVSSLVLTVIFLPVLINFM), 54-74 (TMGGTIFVIAAVISVIWVAAW), 82-102 (VWILVISLLGYGIIGFLDDGI), 122-142 (IIIAVVIVLIASSDHFQFGLY), 145-165 (FAGVVHSIALFTIFIIFWLVG), 176-196 (LDGLATGLSIVAYGTYAYIAF), 200-220 (NFAVLAFCMSVIGGLIAFFIF), 227-247 (IFMGDAGSLALGGGLATVSIM), 255-275 (LLIGIVFVCETASVILQVISF), and 302-322 (VDIVFWLVGLICSILYLAIWG).

The protein belongs to the glycosyltransferase 4 family. MraY subfamily. Mg(2+) serves as cofactor.

The protein localises to the cell membrane. It carries out the reaction UDP-N-acetyl-alpha-D-muramoyl-L-alanyl-gamma-D-glutamyl-L-lysyl-D-alanyl-D-alanine + di-trans,octa-cis-undecaprenyl phosphate = Mur2Ac(oyl-L-Ala-gamma-D-Glu-L-Lys-D-Ala-D-Ala)-di-trans,octa-cis-undecaprenyl diphosphate + UMP. Its pathway is cell wall biogenesis; peptidoglycan biosynthesis. Its function is as follows. Catalyzes the initial step of the lipid cycle reactions in the biosynthesis of the cell wall peptidoglycan: transfers peptidoglycan precursor phospho-MurNAc-pentapeptide from UDP-MurNAc-pentapeptide onto the lipid carrier undecaprenyl phosphate, yielding undecaprenyl-pyrophosphoryl-MurNAc-pentapeptide, known as lipid I. In Lactobacillus acidophilus (strain ATCC 700396 / NCK56 / N2 / NCFM), this protein is Phospho-N-acetylmuramoyl-pentapeptide-transferase.